The sequence spans 513 residues: ATP synthase subunit alpha (513 aa).

An ATP-binding site is contributed by 169 to 176; that stretch reads GDRQTGKT.

The protein belongs to the ATPase alpha/beta chains family. As to quaternary structure, F-type ATPases have 2 components, CF(1) - the catalytic core - and CF(0) - the membrane proton channel. CF(1) has five subunits: alpha(3), beta(3), gamma(1), delta(1), epsilon(1). CF(0) has three main subunits: a(1), b(2) and c(9-12). The alpha and beta chains form an alternating ring which encloses part of the gamma chain. CF(1) is attached to CF(0) by a central stalk formed by the gamma and epsilon chains, while a peripheral stalk is formed by the delta and b chains.

The protein localises to the cell membrane. It catalyses the reaction ATP + H2O + 4 H(+)(in) = ADP + phosphate + 5 H(+)(out). Functionally, produces ATP from ADP in the presence of a proton gradient across the membrane. The alpha chain is a regulatory subunit. The chain is ATP synthase subunit alpha from Polynucleobacter asymbioticus (strain DSM 18221 / CIP 109841 / QLW-P1DMWA-1) (Polynucleobacter necessarius subsp. asymbioticus).